A 581-amino-acid chain; its full sequence is Intermediate filament protein ifa-3 (581 aa).

Residues Met-1 to Ser-33 form a disordered region. Residues Met-1 to Glu-74 are head. A compositionally biased stretch (polar residues) spans Tyr-7 to Ser-33. Positions Glu-71–Asn-424 constitute an IF rod domain. Residues Ile-75–Leu-106 form a coil 1A region. A linker 1 region spans residues Gln-107–Met-120. The tract at residues Tyr-121–Leu-258 is coil 1B. Positions Gln-259–Asn-276 are linker 12. A coil 2 region spans residues Glu-277–Asn-424. The tail stretch occupies residues Gly-425–Thr-578. Residues Ser-457–Gln-574 enclose the LTD domain.

This sequence belongs to the intermediate filament family. In terms of assembly, forms some heteromeric filaments with ifb-1. Expressed in the embryonic and larval hypodermis. Also expressed in the ventral nerve cord of larvae.

Its subcellular location is the cytoplasm. Its function is as follows. Cytoplasmic intermediate filaments provide mechanical strength to cells. Essential protein, involved in attachment structures in epidermal cells that connect muscles to the external cuticle. Required for epidermal morphogenesis in embryos. Probable component of embryonic epidermal attachment structures. The chain is Intermediate filament protein ifa-3 (ifa-3) from Caenorhabditis elegans.